A 200-amino-acid chain; its full sequence is MEDISTEKTVESLEAIRHRIAQIVQSLTHFLAILHQSESLSPWPTIHKNFNILLSQIHSLSNNLAAHSHTLQTTSIYPSLEFPVKEQEPLLTTLLRTKALPEVEEWEANTLQEYEASISSQPKKKEANDAYQKDQLWDQARIIFMEERENYSWFDFVTRRQESEGEFVSQRQLEIDRATEEQNANQMLTDILSFMKSGKR.

This sequence belongs to the Mediator complex subunit 8 family. In terms of assembly, component of the Mediator complex.

It localises to the nucleus. Component of the Mediator complex, a coactivator involved in the regulated transcription of nearly all RNA polymerase II-dependent genes. Mediator functions as a bridge to convey information from gene-specific regulatory proteins to the basal RNA polymerase II transcription machinery. Mediator is recruited to promoters by direct interactions with regulatory proteins and serves as a scaffold for the assembly of a functional preinitiation complex with RNA polymerase II and the general transcription factors. The polypeptide is Mediator of RNA polymerase II transcription subunit 8 (med8) (Schizosaccharomyces pombe (strain 972 / ATCC 24843) (Fission yeast)).